The following is a 219-amino-acid chain: Probable glucosamine 6-phosphate N-acetyltransferase (219 aa).

Residues 42–198 enclose the N-acetyltransferase domain; sequence MKVRPLKDTD…EGPTLKRNAT (157 aa). Residues Thr64, 111–114, and 123–125 contribute to the substrate site; these read KFIH and EDV. Position 133 to 138 (133 to 138) interacts with acetyl-CoA; sequence GKQLGK. Substrate is bound by residues 154–155 and Arg186; that span reads YK.

This sequence belongs to the acetyltransferase family. GNA1 subfamily.

The catalysed reaction is D-glucosamine 6-phosphate + acetyl-CoA = N-acetyl-D-glucosamine 6-phosphate + CoA + H(+). The protein operates within nucleotide-sugar biosynthesis; UDP-N-acetyl-alpha-D-glucosamine biosynthesis; N-acetyl-alpha-D-glucosamine 1-phosphate from alpha-D-glucosamine 6-phosphate (route I): step 1/2. This chain is Probable glucosamine 6-phosphate N-acetyltransferase, found in Drosophila melanogaster (Fruit fly).